Consider the following 157-residue polypeptide: D-aminoacyl-tRNA deacylase (157 aa).

A Gly-cisPro motif, important for rejection of L-amino acids motif is present at residues 137 to 138; sequence GP.

The protein belongs to the DTD family. In terms of assembly, homodimer.

The protein localises to the cytoplasm. The enzyme catalyses glycyl-tRNA(Ala) + H2O = tRNA(Ala) + glycine + H(+). The catalysed reaction is a D-aminoacyl-tRNA + H2O = a tRNA + a D-alpha-amino acid + H(+). Functionally, an aminoacyl-tRNA editing enzyme that deacylates mischarged D-aminoacyl-tRNAs. Also deacylates mischarged glycyl-tRNA(Ala), protecting cells against glycine mischarging by AlaRS. Acts via tRNA-based rather than protein-based catalysis; rejects L-amino acids rather than detecting D-amino acids in the active site. By recycling D-aminoacyl-tRNA to D-amino acids and free tRNA molecules, this enzyme counteracts the toxicity associated with the formation of D-aminoacyl-tRNA entities in vivo and helps enforce protein L-homochirality. This chain is D-aminoacyl-tRNA deacylase, found in Cyanothece sp. (strain PCC 7425 / ATCC 29141).